The sequence spans 692 residues: Elongation factor G (692 aa).

Residues 8–283 (NRIRNIGIAA…AVIDYLPAPT (276 aa)) form the tr-type G domain. GTP contacts are provided by residues 17-24 (AHIDAGKT), 81-85 (DTPGH), and 135-138 (NKMD).

It belongs to the TRAFAC class translation factor GTPase superfamily. Classic translation factor GTPase family. EF-G/EF-2 subfamily.

The protein resides in the cytoplasm. Functionally, catalyzes the GTP-dependent ribosomal translocation step during translation elongation. During this step, the ribosome changes from the pre-translocational (PRE) to the post-translocational (POST) state as the newly formed A-site-bound peptidyl-tRNA and P-site-bound deacylated tRNA move to the P and E sites, respectively. Catalyzes the coordinated movement of the two tRNA molecules, the mRNA and conformational changes in the ribosome. The protein is Elongation factor G (fusA) of Helicobacter pylori (strain ATCC 700392 / 26695) (Campylobacter pylori).